The primary structure comprises 474 residues: uncharacterized protein (474 aa).

A helical membrane pass occupies residues 374 to 398 (GLICYLALFSISLMIENIIGLTISL).

The protein resides in the membrane. This is an uncharacterized protein from Borreliella burgdorferi (strain ATCC 35210 / DSM 4680 / CIP 102532 / B31) (Borrelia burgdorferi).